We begin with the raw amino-acid sequence, 432 residues long: Glutamyl-tRNA reductase (432 aa).

Residues 55–58, serine 114, 119–121, and glutamine 125 each bind substrate; these read TCNR and ETQ. The active-site Nucleophile is cysteine 56. Position 194-199 (194-199) interacts with NADP(+); that stretch reads GAGEMI.

This sequence belongs to the glutamyl-tRNA reductase family. As to quaternary structure, homodimer.

The enzyme catalyses (S)-4-amino-5-oxopentanoate + tRNA(Glu) + NADP(+) = L-glutamyl-tRNA(Glu) + NADPH + H(+). It functions in the pathway porphyrin-containing compound metabolism; protoporphyrin-IX biosynthesis; 5-aminolevulinate from L-glutamyl-tRNA(Glu): step 1/2. In terms of biological role, catalyzes the NADPH-dependent reduction of glutamyl-tRNA(Glu) to glutamate 1-semialdehyde (GSA). The polypeptide is Glutamyl-tRNA reductase (Burkholderia ambifaria (strain MC40-6)).